The following is a 351-amino-acid chain: Histidine protein kinase SaeS (351 aa).

2 consecutive transmembrane segments (helical) span residues 9–29 and 40–60; these read IIIGVVSSILLTSTILAIAYI and TLTLTTIITSCLTLLICSIFI. In terms of domain architecture, HAMP spans 61–114; it reads NPLIQKIKQFNIKTKQFANGNYASNDKTFNSPKEIYELNQSFNKMASEITQQMN. The region spanning 129–348 is the Histidine kinase domain; sequence NLAHDLKTPL…TMTVTLHKLD (220 aa). His-132 bears the Phosphohistidine; by autocatalysis mark.

In terms of processing, autophosphorylated.

The protein localises to the cell membrane. It catalyses the reaction ATP + protein L-histidine = ADP + protein N-phospho-L-histidine.. In terms of biological role, member of the two-component regulatory system SaeR/SaeS involved in the regulation of staphylococcal virulence factors in a strain-dependent fashion. Probably functions as a membrane-associated protein kinase that upon sensing the appropriate signal, autophosphorylates and in turn activates the cytosolic response regulator SaeR. The polypeptide is Histidine protein kinase SaeS (saeS) (Staphylococcus aureus (strain bovine RF122 / ET3-1)).